We begin with the raw amino-acid sequence, 183 residues long: Ribosome rescue factor SmrB (183 aa).

The region spanning leucine 98–glutamate 173 is the Smr domain.

This sequence belongs to the SmrB family. In terms of assembly, associates with collided ribosomes, but not with correctly translating polysomes.

Functionally, acts as a ribosome collision sensor. Detects stalled/collided disomes (pairs of ribosomes where the leading ribosome is stalled and a second ribosome has collided with it) and endonucleolytically cleaves mRNA at the 5' boundary of the stalled ribosome. Stalled/collided disomes form a new interface (primarily via the 30S subunits) that binds SmrB. Cleaved mRNA becomes available for tmRNA ligation, leading to ribosomal subunit dissociation and rescue of stalled ribosomes. This Shigella sonnei (strain Ss046) protein is Ribosome rescue factor SmrB.